The chain runs to 508 residues: Glycerol kinase (508 aa).

Thr-14 is a binding site for ADP. Residues Thr-14, Thr-15, and Ser-16 each contribute to the ATP site. Thr-14 is a sn-glycerol 3-phosphate binding site. Position 18 (Arg-18) interacts with ADP. Residues Arg-84, Glu-85, and Tyr-136 each coordinate sn-glycerol 3-phosphate. Arg-84, Glu-85, and Tyr-136 together coordinate glycerol. His-232 is subject to Phosphohistidine; by HPr. Residue Asp-246 participates in sn-glycerol 3-phosphate binding. Glycerol is bound by residues Asp-246 and Gln-247. 2 residues coordinate ADP: Thr-268 and Gly-311. Positions 268, 311, 315, and 412 each coordinate ATP. Residues Gly-412 and Asn-416 each coordinate ADP.

This sequence belongs to the FGGY kinase family. In terms of assembly, homotetramer and homodimer (in equilibrium). In terms of processing, the phosphoenolpyruvate-dependent sugar phosphotransferase system (PTS), including enzyme I, and histidine-containing protein (HPr) are required for the phosphorylation, which leads to the activation of the enzyme.

It catalyses the reaction glycerol + ATP = sn-glycerol 3-phosphate + ADP + H(+). Its pathway is polyol metabolism; glycerol degradation via glycerol kinase pathway; sn-glycerol 3-phosphate from glycerol: step 1/1. Its activity is regulated as follows. Activated by phosphorylation and inhibited by fructose 1,6-bisphosphate (FBP). Functionally, key enzyme in the regulation of glycerol uptake and metabolism. Catalyzes the phosphorylation of glycerol to yield sn-glycerol 3-phosphate. The chain is Glycerol kinase from Streptococcus pyogenes serotype M4 (strain MGAS10750).